Consider the following 283-residue polypeptide: MQQFPRLARVGLGFRRELIPALKSGVPATIDFFEIAPENWIDLGGGAARDLLFFTERYPFVCHGLSLSIGGPAPLDEILLQKIRQFLDQHRVLLYTEHLSYCSDDGHLYDLLPIPFTEEAVKYVAERVRRTQDILERRIALENASFYVASPISDMSELDFIRAVLLEADCDLHLDVNNVYVNSINHDYDPVDFIRALPSDRIVYMHMAGHHKEAENLIIDTHGADVIDPVWSLLDQTYGMHGVAPTLLERDFNIPPLEQLMREVLHIALIQAQHADSGDASAT.

The protein belongs to the UPF0276 family.

The chain is UPF0276 protein Nmul_A2550 from Nitrosospira multiformis (strain ATCC 25196 / NCIMB 11849 / C 71).